Reading from the N-terminus, the 605-residue chain is UvrABC system protein C (605 aa).

One can recognise a GIY-YIG domain in the interval 14-92 (QSCGVYKMVG…IKSLKPLYNI (79 aa)). Residues 202 to 237 (KEVKEQLLFTMRKCSSEENYELAAIYRDRVKFLEQI) enclose the UVR domain.

The protein belongs to the UvrC family. As to quaternary structure, interacts with UvrB in an incision complex.

It is found in the cytoplasm. The UvrABC repair system catalyzes the recognition and processing of DNA lesions. UvrC both incises the 5' and 3' sides of the lesion. The N-terminal half is responsible for the 3' incision and the C-terminal half is responsible for the 5' incision. The polypeptide is UvrABC system protein C (Wolbachia pipientis wMel).